The chain runs to 272 residues: 3-methyl-2-oxobutanoate hydroxymethyltransferase (272 aa).

Mg(2+) is bound by residues D43 and D82. 3-methyl-2-oxobutanoate contacts are provided by residues 43-44, D82, and K112; that span reads DS. E114 lines the Mg(2+) pocket. Catalysis depends on E179, which acts as the Proton acceptor.

Belongs to the PanB family. As to quaternary structure, homodecamer; pentamer of dimers. It depends on Mg(2+) as a cofactor.

It localises to the cytoplasm. It catalyses the reaction 3-methyl-2-oxobutanoate + (6R)-5,10-methylene-5,6,7,8-tetrahydrofolate + H2O = 2-dehydropantoate + (6S)-5,6,7,8-tetrahydrofolate. It participates in cofactor biosynthesis; (R)-pantothenate biosynthesis; (R)-pantoate from 3-methyl-2-oxobutanoate: step 1/2. Functionally, catalyzes the reversible reaction in which hydroxymethyl group from 5,10-methylenetetrahydrofolate is transferred onto alpha-ketoisovalerate to form ketopantoate. The chain is 3-methyl-2-oxobutanoate hydroxymethyltransferase from Staphylococcus epidermidis (strain ATCC 35984 / DSM 28319 / BCRC 17069 / CCUG 31568 / BM 3577 / RP62A).